Consider the following 2698-residue polypeptide: Zinc finger protein 292 (2698 aa).

The C2H2-type 1 zinc-finger motif lies at 567 to 589 (YSCPICAKNFNSKDSFVPHVTLH). The residue at position 654 (serine 654) is a Phosphoserine. 6 C2H2-type zinc fingers span residues 681 to 705 (FNCP…VKGH), 722 to 744 (VICQ…LQMH), 750 to 774 (YICI…RKEH), 779 to 803 (AKCL…EAQH), 807 to 831 (YTCK…QDGH), and 1085 to 1110 (FSCQ…KTAH). Basic and acidic residues predominate over residues 822–834 (SEMEKHQDGHSHP). Residues 822–894 (SEMEKHQDGH…AEPAVTKHGQ (73 aa)) form a disordered region. Lysine 1104 bears the N6-acetyllysine mark. Serine 1146 carries the post-translational modification Phosphoserine. Positions 1278–1325 (NSTNHYPSQTDGNINSSFLKGGSSENGVFPSQVSSADDFSSTSAQPST) are enriched in polar residues. The disordered stretch occupies residues 1278–1349 (NSTNHYPSQT…KERKPKHNKR (72 aa)). The segment at 1361-1383 (FICSRCYRAFTNPRSLGGHLSKR) adopts a C2H2-type 8; degenerate zinc-finger fold. 2 stretches are compositionally biased toward polar residues: residues 1574–1603 (FSSS…TRSS) and 1624–1633 (SVSNTSQNVL). Positions 1574–1656 (FSSSTEPPQN…PVPDTNTRSD (83 aa)) are disordered. 2 consecutive C2H2-type zinc fingers follow at residues 1879–1904 (FVCQ…GKIH) and 1924–1949 (FKCV…QLVH). Residues 1964 to 1997 (PYGRKSQSENLSSPQNNQVKKQPSMAEETKTESQ) form a disordered region. Positions 1971 to 1984 (SENLSSPQNNQVKK) are enriched in polar residues. Lysine 2020 is subject to N6-acetyllysine. A compositionally biased stretch (basic and acidic residues) spans 2021–2032 (QLAEKKSPEKPE). The tract at residues 2021–2075 (QLAEKKSPEKPESSSQPVTSSAEQYNANLANLKTKGRKNKRHRKEKEEKREKNPV) is disordered. The span at 2038 to 2051 (VTSSAEQYNANLAN) shows a compositional bias: polar residues. Positions 2054–2064 (TKGRKNKRHRK) are enriched in basic residues. 4 C2H2-type zinc fingers span residues 2091-2116 (YCCV…QAVH), 2149-2174 (FRCQ…MKLH), 2193-2218 (FPCD…EVDH), and 2233-2258 (YKCD…FNKH). Positions 2262–2271 (HKAHLIRPRK) are enriched in basic residues. The interval 2262-2323 (HKAHLIRPRK…KSNLENKSAK (62 aa)) is disordered. The C2H2-type 15 zinc finger occupies 2362–2386 (YPCMIKGCTSVVTSESNIIRHYKCH). Disordered regions lie at residues 2411–2454 (GKEI…GEKD), 2467–2553 (LINE…EEHP), and 2580–2608 (KQKK…HVDK). A compositionally biased stretch (basic and acidic residues) spans 2421-2437 (KNDKKDPDSSVLEKNDN). The span at 2470–2488 (EDSTNAENQGNTTLKGNNE) shows a compositional bias: polar residues. Composition is skewed to basic and acidic residues over residues 2489–2501 (FQEH…ERQK) and 2580–2590 (KQKKNSDRDHS). Over residues 2596–2606 (RGSHSSSRRHV) the composition is skewed to basic residues.

The protein belongs to the krueppel C2H2-type zinc-finger protein family. As to expression, expressed in postnatal day 1 (P1) pituitary. Also detected in presomatotrophic cell line GHFT1-5.

The protein localises to the nucleus. May be involved in transcriptional regulation. The sequence is that of Zinc finger protein 292 from Mus musculus (Mouse).